The primary structure comprises 482 residues: Cysteine--tRNA ligase (482 aa).

C29 contacts Zn(2+). The 'HIGH' region signature appears at 31–41 (PTVYDFAHIGN). Residues C224, H249, and E253 each coordinate Zn(2+). The short motif at 282–286 (KMSKS) is the 'KMSKS' region element. K285 provides a ligand contact to ATP.

The protein belongs to the class-I aminoacyl-tRNA synthetase family. In terms of assembly, monomer. The cofactor is Zn(2+).

Its subcellular location is the cytoplasm. The enzyme catalyses tRNA(Cys) + L-cysteine + ATP = L-cysteinyl-tRNA(Cys) + AMP + diphosphate. This is Cysteine--tRNA ligase from Nitrobacter hamburgensis (strain DSM 10229 / NCIMB 13809 / X14).